Here is a 246-residue protein sequence, read N- to C-terminus: 1-(5-phosphoribosyl)-5-[(5-phosphoribosylamino)methylideneamino] imidazole-4-carboxamide isomerase (246 aa).

Catalysis depends on Asp-10, which acts as the Proton acceptor.

This sequence belongs to the HisA/HisF family.

The protein resides in the cytoplasm. The enzyme catalyses 1-(5-phospho-beta-D-ribosyl)-5-[(5-phospho-beta-D-ribosylamino)methylideneamino]imidazole-4-carboxamide = 5-[(5-phospho-1-deoxy-D-ribulos-1-ylimino)methylamino]-1-(5-phospho-beta-D-ribosyl)imidazole-4-carboxamide. It participates in amino-acid biosynthesis; L-histidine biosynthesis; L-histidine from 5-phospho-alpha-D-ribose 1-diphosphate: step 4/9. The protein is 1-(5-phosphoribosyl)-5-[(5-phosphoribosylamino)methylideneamino] imidazole-4-carboxamide isomerase of Corynebacterium efficiens (strain DSM 44549 / YS-314 / AJ 12310 / JCM 11189 / NBRC 100395).